The sequence spans 230 residues: MQRGKKYKALKEKVDSTKFFNIDQAVELAKSTSYTKFDGTVEIATKVNYKSLQNIRGTISLPHGNGKKVRVLVFCKGDKQNDAKAAGAEFVGDMDLIEKVAGGWTDFDACVATPDMMKDVGKLGPILGRKGLMPKPKAGTVTTDVAKAVNELKSGRVEYRPDKGGVVHLGVGKVSFDNAKLVENIRTVVQTLMRDKPSDAKGDYLKTFSVSPTMGVGVKVDVKELVNTSI.

The protein belongs to the universal ribosomal protein uL1 family. In terms of assembly, part of the 50S ribosomal subunit.

Binds directly to 23S rRNA. The L1 stalk is quite mobile in the ribosome, and is involved in E site tRNA release. In terms of biological role, protein L1 is also a translational repressor protein, it controls the translation of the L11 operon by binding to its mRNA. The protein is Large ribosomal subunit protein uL1 of Leptospira borgpetersenii serovar Hardjo-bovis (strain L550).